A 751-amino-acid chain; its full sequence is Cellulose synthase-like protein G3 (751 aa).

Transmembrane regions (helical) follow at residues 47 to 67 and 72 to 92; these read IYAV…VHSL and TTLI…MWAT. Active-site residues include Asp-161 and Asp-466. 6 helical membrane passes run 543–563, 577–597, 617–639, 674–694, 697–717, and 731–751; these read CWAF…LALL, FWLY…DFVL, FSSH…THGF, TVAI…FAWG, LVLE…IYEA, and VCFV…VFLK.

Belongs to the glycosyltransferase 2 family. Plant cellulose synthase-like G subfamily.

The protein localises to the golgi apparatus membrane. Its function is as follows. Thought to be a Golgi-localized beta-glycan synthase that polymerize the backbones of noncellulosic polysaccharides (hemicelluloses) of plant cell wall. In Arabidopsis thaliana (Mouse-ear cress), this protein is Cellulose synthase-like protein G3 (CSLG3).